The sequence spans 481 residues: Phenylalanine--tRNA ligase alpha subunit (481 aa).

L-phenylalanine is bound by residues Thr322, 361 to 363 (QLE), and Tyr401. Mg(2+) is bound at residue Glu403. Phe426 serves as a coordination point for L-phenylalanine.

It belongs to the class-II aminoacyl-tRNA synthetase family. Phe-tRNA synthetase alpha subunit type 2 subfamily. In terms of assembly, tetramer of two alpha and two beta subunits. Mg(2+) serves as cofactor.

The protein localises to the cytoplasm. The catalysed reaction is tRNA(Phe) + L-phenylalanine + ATP = L-phenylalanyl-tRNA(Phe) + AMP + diphosphate + H(+). The sequence is that of Phenylalanine--tRNA ligase alpha subunit from Methanoculleus marisnigri (strain ATCC 35101 / DSM 1498 / JR1).